The chain runs to 70 residues: Cold shock-like protein CspG (70 aa).

The CSD domain occupies 7 to 67 (GLVKWFNEEK…GQKGLQAANV (61 aa)).

It localises to the cytoplasm. The protein is Cold shock-like protein CspG (cspG) of Shewanella violacea (strain JCM 10179 / CIP 106290 / LMG 19151 / DSS12).